The sequence spans 471 residues: 3-isopropylmalate dehydratase large subunit (471 aa).

[4Fe-4S] cluster is bound by residues Cys-347, Cys-407, and Cys-410.

This sequence belongs to the aconitase/IPM isomerase family. LeuC type 1 subfamily. In terms of assembly, heterodimer of LeuC and LeuD. Requires [4Fe-4S] cluster as cofactor.

The catalysed reaction is (2R,3S)-3-isopropylmalate = (2S)-2-isopropylmalate. The protein operates within amino-acid biosynthesis; L-leucine biosynthesis; L-leucine from 3-methyl-2-oxobutanoate: step 2/4. Functionally, catalyzes the isomerization between 2-isopropylmalate and 3-isopropylmalate, via the formation of 2-isopropylmaleate. The sequence is that of 3-isopropylmalate dehydratase large subunit from Vibrio parahaemolyticus serotype O3:K6 (strain RIMD 2210633).